The following is a 166-amino-acid chain: Transcriptional repressor NrdR (166 aa).

The segment at 3–34 (CPFCGFSDSRVLDSRPTVEGNSIRRRRECCGC) is a zinc-finger region. Positions 49–139 (LIVVKKDGRR…VYREFRDAES (91 aa)) constitute an ATP-cone domain.

This sequence belongs to the NrdR family. Zn(2+) serves as cofactor.

Its function is as follows. Negatively regulates transcription of bacterial ribonucleotide reductase nrd genes and operons by binding to NrdR-boxes. The polypeptide is Transcriptional repressor NrdR (Pelotomaculum thermopropionicum (strain DSM 13744 / JCM 10971 / SI)).